Here is a 375-residue protein sequence, read N- to C-terminus: Queuine tRNA-ribosyltransferase (375 aa).

Catalysis depends on D89, which acts as the Proton acceptor. Residues 89–93 (DSGGF), D143, Q187, and G214 each bind substrate. Residues 245–251 (GVGKPED) are RNA binding. D264 functions as the Nucleophile in the catalytic mechanism. The tract at residues 269–273 (TRNAR) is RNA binding; important for wobble base 34 recognition. Residues C302, C304, C307, and H333 each contribute to the Zn(2+) site.

This sequence belongs to the queuine tRNA-ribosyltransferase family. In terms of assembly, homodimer. Within each dimer, one monomer is responsible for RNA recognition and catalysis, while the other monomer binds to the replacement base PreQ1. Requires Zn(2+) as cofactor.

The catalysed reaction is 7-aminomethyl-7-carbaguanine + guanosine(34) in tRNA = 7-aminomethyl-7-carbaguanosine(34) in tRNA + guanine. Its pathway is tRNA modification; tRNA-queuosine biosynthesis. Its function is as follows. Catalyzes the base-exchange of a guanine (G) residue with the queuine precursor 7-aminomethyl-7-deazaguanine (PreQ1) at position 34 (anticodon wobble position) in tRNAs with GU(N) anticodons (tRNA-Asp, -Asn, -His and -Tyr). Catalysis occurs through a double-displacement mechanism. The nucleophile active site attacks the C1' of nucleotide 34 to detach the guanine base from the RNA, forming a covalent enzyme-RNA intermediate. The proton acceptor active site deprotonates the incoming PreQ1, allowing a nucleophilic attack on the C1' of the ribose to form the product. After dissociation, two additional enzymatic reactions on the tRNA convert PreQ1 to queuine (Q), resulting in the hypermodified nucleoside queuosine (7-(((4,5-cis-dihydroxy-2-cyclopenten-1-yl)amino)methyl)-7-deazaguanosine). This is Queuine tRNA-ribosyltransferase from Salmonella enteritidis PT4 (strain P125109).